Here is a 159-residue protein sequence, read N- to C-terminus: Ribosomal RNA large subunit methyltransferase H (159 aa).

S-adenosyl-L-methionine is bound by residues glycine 108 and 127–132 (FSKMTF).

The protein belongs to the RNA methyltransferase RlmH family. As to quaternary structure, homodimer.

The protein resides in the cytoplasm. The enzyme catalyses pseudouridine(1915) in 23S rRNA + S-adenosyl-L-methionine = N(3)-methylpseudouridine(1915) in 23S rRNA + S-adenosyl-L-homocysteine + H(+). Specifically methylates the pseudouridine at position 1915 (m3Psi1915) in 23S rRNA. The chain is Ribosomal RNA large subunit methyltransferase H from Clostridium beijerinckii (strain ATCC 51743 / NCIMB 8052) (Clostridium acetobutylicum).